Reading from the N-terminus, the 159-residue chain is FCS-Like Zinc finger 2 (159 aa).

The FLZ-type zinc-finger motif lies at His75–Glu119. Basic and acidic residues predominate over residues Glu113–Gln122. A disordered region spans residues Glu113–Ala159.

The protein belongs to the FLZ family. Interacts with KIN10 and KIN11 via its FLZ-type zinc finger domain. Interacts with KINB1, KINB2, KINB3 and SNF4 via its N-terminal part. Forms heterodimer with FLZ7, FLZ10, FLZ11, FLZ12, FLZ15, FLZ17 and FLZ18 in vitro.

Its function is as follows. May act as an adapter to facilitate the interaction of SnRK1 complex with effector proteins, conferring tissue- and stimulus-type specific differences in the SnRK1 regulation pathway. This Arabidopsis thaliana (Mouse-ear cress) protein is FCS-Like Zinc finger 2.